The following is a 160-amino-acid chain: NADH-quinone oxidoreductase subunit I (160 aa).

2 consecutive 4Fe-4S ferredoxin-type domains span residues 51–81 and 91–120; these read LRRY…IEAA and VRYD…EGPN. Residues C61, C64, C67, C71, C100, C103, C106, and C110 each contribute to the [4Fe-4S] cluster site.

The protein belongs to the complex I 23 kDa subunit family. In terms of assembly, NDH-1 is composed of 14 different subunits. Subunits NuoA, H, J, K, L, M, N constitute the membrane sector of the complex. [4Fe-4S] cluster serves as cofactor.

The protein localises to the cell inner membrane. The enzyme catalyses a quinone + NADH + 5 H(+)(in) = a quinol + NAD(+) + 4 H(+)(out). Its function is as follows. NDH-1 shuttles electrons from NADH, via FMN and iron-sulfur (Fe-S) centers, to quinones in the respiratory chain. The immediate electron acceptor for the enzyme in this species is believed to be ubiquinone. Couples the redox reaction to proton translocation (for every two electrons transferred, four hydrogen ions are translocated across the cytoplasmic membrane), and thus conserves the redox energy in a proton gradient. The chain is NADH-quinone oxidoreductase subunit I from Anaplasma marginale (strain St. Maries).